The sequence spans 275 residues: Exosome complex component Rrp42 (275 aa).

Belongs to the RNase PH family. Rrp42 subfamily. Component of the archaeal exosome complex. Forms a hexameric ring-like arrangement composed of 3 Rrp41-Rrp42 heterodimers. The hexameric ring associates with a trimer of Rrp4 and/or Csl4 subunits.

It localises to the cytoplasm. In terms of biological role, non-catalytic component of the exosome, which is a complex involved in RNA degradation. Contributes to the structuring of the Rrp41 active site. This Sulfurisphaera tokodaii (strain DSM 16993 / JCM 10545 / NBRC 100140 / 7) (Sulfolobus tokodaii) protein is Exosome complex component Rrp42.